The chain runs to 310 residues: DNA-directed RNA polymerase subunit alpha (310 aa).

Positions 1–230 are alpha N-terminal domain (alpha-NTD); that stretch reads MLGKVNGVQI…KLFNPLRVLD (230 aa). The tract at residues 242 to 310 is alpha C-terminal domain (alpha-CTD); sequence NSLIKQKLIE…YKKFGVKLKH (69 aa).

The protein belongs to the RNA polymerase alpha chain family. In plastids the minimal PEP RNA polymerase catalytic core is composed of four subunits: alpha, beta, beta', and beta''. When a (nuclear-encoded) sigma factor is associated with the core the holoenzyme is formed, which can initiate transcription.

Its subcellular location is the plastid. The protein resides in the chloroplast. The enzyme catalyses RNA(n) + a ribonucleoside 5'-triphosphate = RNA(n+1) + diphosphate. Its function is as follows. DNA-dependent RNA polymerase catalyzes the transcription of DNA into RNA using the four ribonucleoside triphosphates as substrates. This chain is DNA-directed RNA polymerase subunit alpha, found in Cyanidium caldarium (Red alga).